We begin with the raw amino-acid sequence, 89 residues long: MSAPRYKSGSAKKVYKKAPGNSSIVHYRRKKQSNAVCGACGALLNGVPRGRAVEITKLAKTQKRPERAFGGNLCPKCVKKMMVAKARNF.

The protein belongs to the eukaryotic ribosomal protein eL34 family.

This Methanococcus maripaludis (strain C6 / ATCC BAA-1332) protein is Large ribosomal subunit protein eL34.